A 492-amino-acid polypeptide reads, in one-letter code: Ketol-acid reductoisomerase (NADP(+)) (492 aa).

Residues 15–208 enclose the KARI N-terminal Rossmann domain; the sequence is AQLGKCRFMA…GGHRAGVLEF (194 aa). NADP(+)-binding positions include 45-48, R68, R76, S78, and 108-110; these read CGAQ and DKQ. The active site involves H132. G158 lines the NADP(+) pocket. KARI C-terminal knotted domains lie at 209–344 and 345–485; these read SFVA…NAPQ and FEGK…MTDM. Residues D217, E221, E389, and E393 each coordinate Mg(2+). Substrate is bound at residue S414.

Belongs to the ketol-acid reductoisomerase family. Requires Mg(2+) as cofactor.

The enzyme catalyses (2R)-2,3-dihydroxy-3-methylbutanoate + NADP(+) = (2S)-2-acetolactate + NADPH + H(+). It catalyses the reaction (2R,3R)-2,3-dihydroxy-3-methylpentanoate + NADP(+) = (S)-2-ethyl-2-hydroxy-3-oxobutanoate + NADPH + H(+). Its pathway is amino-acid biosynthesis; L-isoleucine biosynthesis; L-isoleucine from 2-oxobutanoate: step 2/4. It participates in amino-acid biosynthesis; L-valine biosynthesis; L-valine from pyruvate: step 2/4. Involved in the biosynthesis of branched-chain amino acids (BCAA). Catalyzes an alkyl-migration followed by a ketol-acid reduction of (S)-2-acetolactate (S2AL) to yield (R)-2,3-dihydroxy-isovalerate. In the isomerase reaction, S2AL is rearranged via a Mg-dependent methyl migration to produce 3-hydroxy-3-methyl-2-ketobutyrate (HMKB). In the reductase reaction, this 2-ketoacid undergoes a metal-dependent reduction by NADPH to yield (R)-2,3-dihydroxy-isovalerate. The protein is Ketol-acid reductoisomerase (NADP(+)) of Yersinia pestis bv. Antiqua (strain Antiqua).